The primary structure comprises 312 residues: MLTELALGLFALWIAIFSQALHKIEEGHVGVYYRGGALLKAVTNPGYHMHIPFLTTVKSVQVTLQTDEATNVPCGTSGGVLIYFDRIEVVNFLSQDSVYAIVKNYTVDYDRPLIFNKVHHEVNQFCSVHTLQEVYIDLFDKIDEEIKNALQEDLVKMAPGLYVQAVRVTKPKIPEAIRLNYEKMEAEKTKLLVAQETQKVVEKLAETERKKAVIEAEKAAQVALIHQKRLLSEKETEKLLNQMEAESNLASERSKADAEFYKAQKQADSNKILLTKEYLELQKIRAIASNNKIYYGDSIPQAFVMGTTQQTV.

Topologically, residues 1–3 (MLT) are cytoplasmic. A helical transmembrane segment spans residues 4–24 (ELALGLFALWIAIFSQALHKI). Topologically, residues 25 to 312 (EEGHVGVYYR…FVMGTTQQTV (288 aa)) are lumenal. Asparagine 104 carries an N-linked (GlcNAc...) asparagine glycan.

Belongs to the band 7/mec-2 family. In terms of assembly, seems to form a multimeric complex. Expressed in the germline only.

It is found in the endoplasmic reticulum membrane. This is Erlin from Caenorhabditis elegans.